Consider the following 232-residue polypeptide: Flagellar L-ring protein (232 aa).

The signal sequence occupies residues 1-21 (MQKYALHAYPVMALMVATLTG). C22 carries the N-palmitoyl cysteine lipid modification. C22 carries S-diacylglycerol cysteine lipidation.

It belongs to the FlgH family. The basal body constitutes a major portion of the flagellar organelle and consists of four rings (L,P,S, and M) mounted on a central rod.

It is found in the cell outer membrane. It localises to the bacterial flagellum basal body. Functionally, assembles around the rod to form the L-ring and probably protects the motor/basal body from shearing forces during rotation. This is Flagellar L-ring protein from Salmonella gallinarum (strain 287/91 / NCTC 13346).